The sequence spans 603 residues: Polypeptide N-acetylgalactosaminyltransferase 10 (603 aa).

Over 1-11 the chain is Cytoplasmic; the sequence is MRRKEKRLLQA. A helical; Signal-anchor for type II membrane protein transmembrane segment spans residues 12–31; sequence VALALAALVLLPNVGLWALY. Residues 32–603 are Lumenal-facing; it reads RERQPDGSPG…STVLENFNKN (572 aa). 2 N-linked (GlcNAc...) asparagine glycosylation sites follow: Asn-124 and Asn-146. Intrachain disulfides connect Cys-135/Cys-365, Cys-356/Cys-432, Cys-471/Cys-488, Cys-523/Cys-538, and Cys-563/Cys-578. The interval 144–253 is catalytic subdomain A; it reads LPNTSIIIPF…VNWLPPLLDR (110 aa). Positions 185 and 214 each coordinate substrate. Position 237 (Asp-237) interacts with Mn(2+). Ser-238 provides a ligand contact to substrate. Residue His-239 participates in Mn(2+) binding. A catalytic subdomain B region spans residues 311–373; it reads PFESPVMAGG…PCSRVGHIYR (63 aa). Trp-342 is a substrate binding site. His-370 contributes to the Mn(2+) binding site. Substrate contacts are provided by Arg-373 and Tyr-378. The interval 373–384 is flexible loop; the sequence is RKYVPYKVPAGV. Residues 458-590 enclose the Ricin B-type lectin domain; it reads AAWGEIRNVG…SSLTQQWLFE (133 aa). N-linked (GlcNAc...) asparagine glycosylation occurs at Asn-593.

It belongs to the glycosyltransferase 2 family. GalNAc-T subfamily. Mn(2+) is required as a cofactor. As to expression, expressed at higher level than GALNT9. In the developing hindbrain region of 14.5 dpc embryos it accumulates in the rapidly dividing, undifferentiated ventricular zone adjacent to the pons. It also accumulates in the regions immediately rostral and caudal to the dorsal rhombic lips differentiating into the cerebellum. Not expressed in the developing choroid plexus.

The protein resides in the golgi apparatus membrane. The enzyme catalyses L-seryl-[protein] + UDP-N-acetyl-alpha-D-galactosamine = a 3-O-[N-acetyl-alpha-D-galactosaminyl]-L-seryl-[protein] + UDP + H(+). It carries out the reaction L-threonyl-[protein] + UDP-N-acetyl-alpha-D-galactosamine = a 3-O-[N-acetyl-alpha-D-galactosaminyl]-L-threonyl-[protein] + UDP + H(+). Its pathway is protein modification; protein glycosylation. Functionally, catalyzes the initial reaction in O-linked oligosaccharide biosynthesis, the transfer of an N-acetyl-D-galactosamine residue to a serine or threonine residue on the protein receptor. Has activity toward Muc5Ac and EA2 peptide substrates. In Mus musculus (Mouse), this protein is Polypeptide N-acetylgalactosaminyltransferase 10 (Galnt10).